Here is a 384-residue protein sequence, read N- to C-terminus: MAPRLPARCWRQLSLVERSATHTTTTAAASSLLLAGRTTPTFSASSPSTVFPSLLPQITKRGVKYGWSTLPKRSRPTRFNQVTQGLPAPTSGPAAALKRREKTTPLRTGVLAVKKGMTVFMGRTGARIPCTVLQLDRVQVVANKTRAKNGYWAVQVGLGERRAENVGAPQLGYYEAKGIPPKQTLAEFKVRNQDGLLPVGVQLFPDWFHVGQVVDVRGITRGMGFAGGMKRHGFAGQEASHGNSLNHRTIGSVGGSQGSGSRVLPGKKMPGRMGAQQHTVQNLPILMVDNELGIVVVKGAVAGHKGAVVKVQDAVKKAPPPEEFVEATKQLLNERFPDAEEKLQAARKLHLELKEARRQGLIDSLIKNGLTEKADGNAAVEASA.

Disordered stretches follow at residues Asn-80 to Glu-101 and Gln-237 to Arg-262. Over residues Ser-240–Thr-249 the composition is skewed to polar residues.

This sequence belongs to the universal ribosomal protein uL3 family. In terms of assembly, component of the mitochondrial large ribosomal subunit (mt-LSU). Mature N.crassa 74S mitochondrial ribosomes consist of a small (37S) and a large (54S) subunit. The 37S small subunit contains a 16S ribosomal RNA (16S mt-rRNA) and 32 different proteins. The 54S large subunit contains a 23S rRNA (23S mt-rRNA) and 42 different proteins.

It localises to the mitochondrion. Its function is as follows. Component of the mitochondrial ribosome (mitoribosome), a dedicated translation machinery responsible for the synthesis of mitochondrial genome-encoded proteins, including at least some of the essential transmembrane subunits of the mitochondrial respiratory chain. The mitoribosomes are attached to the mitochondrial inner membrane and translation products are cotranslationally integrated into the membrane. The polypeptide is Large ribosomal subunit protein uL3m (mrpl9) (Neurospora crassa (strain ATCC 24698 / 74-OR23-1A / CBS 708.71 / DSM 1257 / FGSC 987)).